The sequence spans 101 residues: Small ribosomal subunit protein uS14 (101 aa).

The protein belongs to the universal ribosomal protein uS14 family. As to quaternary structure, part of the 30S ribosomal subunit. Contacts proteins S3 and S10.

Functionally, binds 16S rRNA, required for the assembly of 30S particles and may also be responsible for determining the conformation of the 16S rRNA at the A site. The polypeptide is Small ribosomal subunit protein uS14 (Histophilus somni (strain 2336) (Haemophilus somnus)).